Reading from the N-terminus, the 239-residue chain is 1-(5-phosphoribosyl)-5-[(5-phosphoribosylamino)methylideneamino] imidazole-4-carboxamide isomerase (239 aa).

The active-site Proton acceptor is the Asp8. Residue Asp129 is the Proton donor of the active site.

This sequence belongs to the HisA/HisF family.

It localises to the cytoplasm. The catalysed reaction is 1-(5-phospho-beta-D-ribosyl)-5-[(5-phospho-beta-D-ribosylamino)methylideneamino]imidazole-4-carboxamide = 5-[(5-phospho-1-deoxy-D-ribulos-1-ylimino)methylamino]-1-(5-phospho-beta-D-ribosyl)imidazole-4-carboxamide. It functions in the pathway amino-acid biosynthesis; L-histidine biosynthesis; L-histidine from 5-phospho-alpha-D-ribose 1-diphosphate: step 4/9. This Bacillus cereus (strain ATCC 10987 / NRS 248) protein is 1-(5-phosphoribosyl)-5-[(5-phosphoribosylamino)methylideneamino] imidazole-4-carboxamide isomerase.